The sequence spans 194 residues: Peptidyl-tRNA hydrolase (194 aa).

Tyr-21 lines the tRNA pocket. His-26 acts as the Proton acceptor in catalysis. TRNA-binding residues include Tyr-72, Asn-74, and Asn-120.

The protein belongs to the PTH family. In terms of assembly, monomer.

The protein localises to the cytoplasm. The catalysed reaction is an N-acyl-L-alpha-aminoacyl-tRNA + H2O = an N-acyl-L-amino acid + a tRNA + H(+). Functionally, hydrolyzes ribosome-free peptidyl-tRNAs (with 1 or more amino acids incorporated), which drop off the ribosome during protein synthesis, or as a result of ribosome stalling. Catalyzes the release of premature peptidyl moieties from peptidyl-tRNA molecules trapped in stalled 50S ribosomal subunits, and thus maintains levels of free tRNAs and 50S ribosomes. In Halorhodospira halophila (strain DSM 244 / SL1) (Ectothiorhodospira halophila (strain DSM 244 / SL1)), this protein is Peptidyl-tRNA hydrolase.